We begin with the raw amino-acid sequence, 320 residues long: Homoserine kinase (320 aa).

An ATP-binding site is contributed by 100 to 110 (PLSSGMGSSAA).

Belongs to the GHMP kinase family. Homoserine kinase subfamily.

Its subcellular location is the cytoplasm. The catalysed reaction is L-homoserine + ATP = O-phospho-L-homoserine + ADP + H(+). Its pathway is amino-acid biosynthesis; L-threonine biosynthesis; L-threonine from L-aspartate: step 4/5. Catalyzes the ATP-dependent phosphorylation of L-homoserine to L-homoserine phosphate. In Chlorobium phaeovibrioides (strain DSM 265 / 1930) (Prosthecochloris vibrioformis (strain DSM 265)), this protein is Homoserine kinase.